A 94-amino-acid polypeptide reads, in one-letter code: Pyrimidine/purine nucleoside phosphorylase (94 aa).

The protein belongs to the nucleoside phosphorylase PpnP family.

The enzyme catalyses a purine D-ribonucleoside + phosphate = a purine nucleobase + alpha-D-ribose 1-phosphate. The catalysed reaction is adenosine + phosphate = alpha-D-ribose 1-phosphate + adenine. It carries out the reaction cytidine + phosphate = cytosine + alpha-D-ribose 1-phosphate. It catalyses the reaction guanosine + phosphate = alpha-D-ribose 1-phosphate + guanine. The enzyme catalyses inosine + phosphate = alpha-D-ribose 1-phosphate + hypoxanthine. The catalysed reaction is thymidine + phosphate = 2-deoxy-alpha-D-ribose 1-phosphate + thymine. It carries out the reaction uridine + phosphate = alpha-D-ribose 1-phosphate + uracil. It catalyses the reaction xanthosine + phosphate = alpha-D-ribose 1-phosphate + xanthine. Functionally, catalyzes the phosphorolysis of diverse nucleosides, yielding D-ribose 1-phosphate and the respective free bases. Can use uridine, adenosine, guanosine, cytidine, thymidine, inosine and xanthosine as substrates. Also catalyzes the reverse reactions. This is Pyrimidine/purine nucleoside phosphorylase from Psychromonas ingrahamii (strain DSM 17664 / CCUG 51855 / 37).